Reading from the N-terminus, the 326-residue chain is DNA-directed RNA polymerase subunit alpha (326 aa).

The tract at residues M1–E231 is alpha N-terminal domain (alpha-NTD). The alpha C-terminal domain (alpha-CTD) stretch occupies residues I247 to K326.

It belongs to the RNA polymerase alpha chain family. Homodimer. The RNAP catalytic core consists of 2 alpha, 1 beta, 1 beta' and 1 omega subunit. When a sigma factor is associated with the core the holoenzyme is formed, which can initiate transcription.

It carries out the reaction RNA(n) + a ribonucleoside 5'-triphosphate = RNA(n+1) + diphosphate. Functionally, DNA-dependent RNA polymerase catalyzes the transcription of DNA into RNA using the four ribonucleoside triphosphates as substrates. This is DNA-directed RNA polymerase subunit alpha from Ralstonia nicotianae (strain ATCC BAA-1114 / GMI1000) (Ralstonia solanacearum).